Consider the following 188-residue polypeptide: Putative manganese efflux pump MntP (188 aa).

The next 6 membrane-spanning stretches (helical) occupy residues 2 to 22 (LYIE…AVSV), 40 to 60 (IASV…TMGL), 66 to 86 (ICAF…GKMI), 107 to 127 (LCGL…SLAI), 133 to 153 (LLQA…GVYF), and 167 to 187 (LIGG…HLFF).

The protein belongs to the MntP (TC 9.B.29) family.

It is found in the cell inner membrane. In terms of biological role, probably functions as a manganese efflux pump. In Parabacteroides distasonis (strain ATCC 8503 / DSM 20701 / CIP 104284 / JCM 5825 / NCTC 11152), this protein is Putative manganese efflux pump MntP.